We begin with the raw amino-acid sequence, 72 residues long: SRY-related protein MG44 (72 aa).

The HMG box DNA-binding region spans 1–69 (VKRPMNAFMV…KHMADYPNYK (69 aa)).

It is found in the nucleus. The polypeptide is SRY-related protein MG44 (Tarentola mauritanica (Common wall gecko)).